The chain runs to 209 residues: Xanthine phosphoribosyltransferase 1 (209 aa).

Ser79 is subject to Phosphoserine.

The protein resides in the cytoplasm. Its function is as follows. May act as a xanthine phosphoribosyltransferase involved in the synthesis of purine nucleotides. Such activity is however unclear in vivo. In Saccharomyces cerevisiae (strain ATCC 204508 / S288c) (Baker's yeast), this protein is Xanthine phosphoribosyltransferase 1 (XPT1).